Reading from the N-terminus, the 240-residue chain is Uridylate kinase (240 aa).

12 to 15 (KLSG) is an ATP binding site. The involved in allosteric activation by GTP stretch occupies residues 20–25 (GEQGNG). A UMP-binding site is contributed by Gly54. ATP-binding residues include Gly55 and Arg59. UMP is bound by residues Asp74 and 135-142 (TGNPYFST). ATP is bound by residues Asn163, Tyr169, and Asp172.

Belongs to the UMP kinase family. In terms of assembly, homohexamer.

It is found in the cytoplasm. It catalyses the reaction UMP + ATP = UDP + ADP. It functions in the pathway pyrimidine metabolism; CTP biosynthesis via de novo pathway; UDP from UMP (UMPK route): step 1/1. Its activity is regulated as follows. Allosterically activated by GTP. Inhibited by UTP. Catalyzes the reversible phosphorylation of UMP to UDP. In Bacillus licheniformis (strain ATCC 14580 / DSM 13 / JCM 2505 / CCUG 7422 / NBRC 12200 / NCIMB 9375 / NCTC 10341 / NRRL NRS-1264 / Gibson 46), this protein is Uridylate kinase.